An 876-amino-acid chain; its full sequence is Aspartate--tRNA(Asp/Asn) ligase (876 aa).

The segment at 1-278 is unknown; sequence MAATDTPWRP…FGFKRAYEGF (278 aa). Residues 279–876 are aspartyl-tRNA synthetase; it reads MHVYRSHTCG…PKPKKEVKEG (598 aa). Glu453 contributes to the L-aspartate binding site. Residues 477–480 form an aspartate region; sequence QQFK. Residues Arg499 and His729 each contribute to the L-aspartate site. 499 to 501 is an ATP binding site; it reads RDE. Residue Glu763 coordinates ATP. Arg770 is a binding site for L-aspartate. 815–818 serves as a coordination point for ATP; it reads GVDR.

Belongs to the class-II aminoacyl-tRNA synthetase family. Type 1 subfamily. In terms of assembly, homodimer.

Its subcellular location is the cytoplasm. It carries out the reaction tRNA(Asx) + L-aspartate + ATP = L-aspartyl-tRNA(Asx) + AMP + diphosphate. Its function is as follows. Aspartyl-tRNA synthetase with relaxed tRNA specificity since it is able to aspartylate not only its cognate tRNA(Asp) but also tRNA(Asn). Reaction proceeds in two steps: L-aspartate is first activated by ATP to form Asp-AMP and then transferred to the acceptor end of tRNA(Asp/Asn). In Paramagnetospirillum magneticum (strain ATCC 700264 / AMB-1) (Magnetospirillum magneticum), this protein is Aspartate--tRNA(Asp/Asn) ligase (aspS).